The chain runs to 119 residues: Acidic phospholipase A2 DE-II (119 aa).

7 disulfide bridges follow: C11-C72, C26-C118, C28-C44, C43-C99, C50-C92, C60-C85, and C79-C90. Ca(2+) contacts are provided by Y27, G29, and G31. H47 is a catalytic residue. Residue D48 participates in Ca(2+) binding. The active site involves D93.

It belongs to the phospholipase A2 family. Group I subfamily. D49 sub-subfamily. The cofactor is Ca(2+). As to expression, expressed by the venom gland.

The protein localises to the secreted. The enzyme catalyses a 1,2-diacyl-sn-glycero-3-phosphocholine + H2O = a 1-acyl-sn-glycero-3-phosphocholine + a fatty acid + H(+). PLA2 catalyzes the calcium-dependent hydrolysis of the 2-acyl groups in 3-sn-phosphoglycerides. The polypeptide is Acidic phospholipase A2 DE-II (Naja melanoleuca (Forest cobra)).